Here is a 102-residue protein sequence, read N- to C-terminus: Integration host factor subunit alpha (102 aa).

The protein belongs to the bacterial histone-like protein family. In terms of assembly, heterodimer of an alpha and a beta chain.

Its function is as follows. This protein is one of the two subunits of integration host factor, a specific DNA-binding protein that functions in genetic recombination as well as in transcriptional and translational control. This is Integration host factor subunit alpha from Paracoccus denitrificans (strain Pd 1222).